We begin with the raw amino-acid sequence, 201 residues long: Translation initiation factor IF-3 (201 aa).

The protein belongs to the IF-3 family. As to quaternary structure, monomer.

Its subcellular location is the cytoplasm. Its function is as follows. IF-3 binds to the 30S ribosomal subunit and shifts the equilibrium between 70S ribosomes and their 50S and 30S subunits in favor of the free subunits, thus enhancing the availability of 30S subunits on which protein synthesis initiation begins. The chain is Translation initiation factor IF-3 from Prochlorococcus marinus (strain SARG / CCMP1375 / SS120).